The following is an 83-amino-acid chain: ATP synthase subunit c 2 (83 aa).

The next 2 helical transmembrane spans lie at 8-28 (IASI…PALG) and 58-78 (LAMI…LLFA).

This sequence belongs to the ATPase C chain family. In terms of assembly, F-type ATPases have 2 components, F(1) - the catalytic core - and F(0) - the membrane proton channel. F(1) has five subunits: alpha(3), beta(3), gamma(1), delta(1), epsilon(1). F(0) has four main subunits: a(1), b(1), b'(1) and c(10-14). The alpha and beta chains form an alternating ring which encloses part of the gamma chain. F(1) is attached to F(0) by a central stalk formed by the gamma and epsilon chains, while a peripheral stalk is formed by the delta, b and b' chains.

It localises to the cell inner membrane. In terms of biological role, f(1)F(0) ATP synthase produces ATP from ADP in the presence of a proton or sodium gradient. F-type ATPases consist of two structural domains, F(1) containing the extramembraneous catalytic core and F(0) containing the membrane proton channel, linked together by a central stalk and a peripheral stalk. During catalysis, ATP synthesis in the catalytic domain of F(1) is coupled via a rotary mechanism of the central stalk subunits to proton translocation. Its function is as follows. Key component of the F(0) channel; it plays a direct role in translocation across the membrane. A homomeric c-ring of between 10-14 subunits forms the central stalk rotor element with the F(1) delta and epsilon subunits. This is ATP synthase subunit c 2 from Cereibacter sphaeroides (strain ATCC 17029 / ATH 2.4.9) (Rhodobacter sphaeroides).